The primary structure comprises 325 residues: Phospho-N-acetylmuramoyl-pentapeptide-transferase (325 aa).

9 helical membrane passes run 7–27 (LFVL…FIPF), 57–77 (IVIV…ITGF), 81–101 (LLLL…DDYL), 122–142 (VIAA…FIAI), 146–166 (TFGF…LLGA), 186–206 (IAFG…TALF), 227–247 (VFMG…IAIL), 252–272 (LMLI…IIQV), and 302–322 (VVVT…YIGV).

This sequence belongs to the glycosyltransferase 4 family. MraY subfamily. It depends on Mg(2+) as a cofactor.

The protein resides in the cell membrane. It catalyses the reaction UDP-N-acetyl-alpha-D-muramoyl-L-alanyl-gamma-D-glutamyl-meso-2,6-diaminopimeloyl-D-alanyl-D-alanine + di-trans,octa-cis-undecaprenyl phosphate = di-trans,octa-cis-undecaprenyl diphospho-N-acetyl-alpha-D-muramoyl-L-alanyl-D-glutamyl-meso-2,6-diaminopimeloyl-D-alanyl-D-alanine + UMP. It participates in cell wall biogenesis; peptidoglycan biosynthesis. In terms of biological role, catalyzes the initial step of the lipid cycle reactions in the biosynthesis of the cell wall peptidoglycan: transfers peptidoglycan precursor phospho-MurNAc-pentapeptide from UDP-MurNAc-pentapeptide onto the lipid carrier undecaprenyl phosphate, yielding undecaprenyl-pyrophosphoryl-MurNAc-pentapeptide, known as lipid I. The protein is Phospho-N-acetylmuramoyl-pentapeptide-transferase of Shouchella clausii (strain KSM-K16) (Alkalihalobacillus clausii).